Consider the following 461-residue polypeptide: MNLQIIILAAGQGKRMYSDTPKVLHHLAGKPLLTHVVETAQQLNPNAIHVIYGHGGEQIKSSLPNLPVHWVHQAEQLGTGHAVLQAMPHIPDDAYVLVLSADVPLIQVETLQSLIECSQRQNPDHSVLALLVAELENPSGLGRIIRNNQGEIYSIVEEKDANEQVKNIKEIYSGVCCTLANNLKKWLPQLSNSNAQGEYYLTEIISLAVQNKTPITSLTAKNSFEVQGINNRQQLQQLERIWQQRAANQLMEKGATLADANRFDLRGELYCGKDVYIDINCIFTGKVVLGNGCKIGPNCSLTNVTLGDGCEVYANSVLEGCHIANDCHIGPFARLRSGTQLASHCKIGNFVETKKAIFDEGTKASHLSYLGDVLLGKNVNVGAGTITCNYDGVNKHQTIIEDGVFIGSDTQLIAPVTVGANATIGAGSTIRRNVPPDELTLTESRQKTIYGWKRPVKRERD.

A pyrophosphorylase region spans residues 1–232 (MNLQIIILAA…SFEVQGINNR (232 aa)). UDP-N-acetyl-alpha-D-glucosamine is bound by residues 8–11 (LAAG), lysine 22, glutamine 73, and 78–79 (GT). A Mg(2+)-binding site is contributed by aspartate 102. 3 residues coordinate UDP-N-acetyl-alpha-D-glucosamine: glycine 142, glutamate 157, and asparagine 230. Asparagine 230 contributes to the Mg(2+) binding site. The tract at residues 233-253 (QQLQQLERIWQQRAANQLMEK) is linker. Residues 254–461 (GATLADANRF…WKRPVKRERD (208 aa)) are N-acetyltransferase. Positions 336 and 354 each coordinate UDP-N-acetyl-alpha-D-glucosamine. Residue histidine 366 is the Proton acceptor of the active site. Positions 369 and 380 each coordinate UDP-N-acetyl-alpha-D-glucosamine. Residues alanine 383, 389 to 390 (NY), serine 408, and alanine 426 contribute to the acetyl-CoA site.

This sequence in the N-terminal section; belongs to the N-acetylglucosamine-1-phosphate uridyltransferase family. In the C-terminal section; belongs to the transferase hexapeptide repeat family. As to quaternary structure, homotrimer. Mg(2+) is required as a cofactor.

It localises to the cytoplasm. The catalysed reaction is alpha-D-glucosamine 1-phosphate + acetyl-CoA = N-acetyl-alpha-D-glucosamine 1-phosphate + CoA + H(+). The enzyme catalyses N-acetyl-alpha-D-glucosamine 1-phosphate + UTP + H(+) = UDP-N-acetyl-alpha-D-glucosamine + diphosphate. It functions in the pathway nucleotide-sugar biosynthesis; UDP-N-acetyl-alpha-D-glucosamine biosynthesis; N-acetyl-alpha-D-glucosamine 1-phosphate from alpha-D-glucosamine 6-phosphate (route II): step 2/2. Its pathway is nucleotide-sugar biosynthesis; UDP-N-acetyl-alpha-D-glucosamine biosynthesis; UDP-N-acetyl-alpha-D-glucosamine from N-acetyl-alpha-D-glucosamine 1-phosphate: step 1/1. It participates in bacterial outer membrane biogenesis; LPS lipid A biosynthesis. In terms of biological role, catalyzes the last two sequential reactions in the de novo biosynthetic pathway for UDP-N-acetylglucosamine (UDP-GlcNAc). The C-terminal domain catalyzes the transfer of acetyl group from acetyl coenzyme A to glucosamine-1-phosphate (GlcN-1-P) to produce N-acetylglucosamine-1-phosphate (GlcNAc-1-P), which is converted into UDP-GlcNAc by the transfer of uridine 5-monophosphate (from uridine 5-triphosphate), a reaction catalyzed by the N-terminal domain. The chain is Bifunctional protein GlmU from Legionella pneumophila subsp. pneumophila (strain Philadelphia 1 / ATCC 33152 / DSM 7513).